The following is a 488-amino-acid chain: Elongation factor Tu, chloroplastic (488 aa).

A disordered region spans residues 1 to 20; the sequence is MALSSTAATTSSKLKLSNPP. A chloroplast-targeting transit peptide spans 1–79; the sequence is MALSSTAATT…RPSSSPFTVR (79 aa). The 205-residue stretch at 89–293 folds into the tr-type G domain; it reads KPHLNIGTIG…EVDKYIPIPQ (205 aa). A G1 region spans residues 98–105; the sequence is GHVDHGKT. GTP is bound at residue 98–105; sequence GHVDHGKT. The G2 stretch occupies residues 139–143; it reads GITIN. Residues 160-163 form a G3 region; the sequence is DCPG. GTP is bound by residues 160–164 and 215–218; these read DCPGH and NKQD. Residues 215–218 are G4; sequence NKQD. The tract at residues 253 to 255 is G5; sequence SAL.

The protein belongs to the TRAFAC class translation factor GTPase superfamily. Classic translation factor GTPase family. EF-Tu/EF-1A subfamily. In terms of tissue distribution, higher expression in leaves than in roots.

It is found in the plastid. It localises to the chloroplast. In terms of biological role, this protein promotes the GTP-dependent binding of aminoacyl-tRNA to the A-site of ribosomes during protein biosynthesis. This Pisum sativum (Garden pea) protein is Elongation factor Tu, chloroplastic (tufA).